Here is a 287-residue protein sequence, read N- to C-terminus: ATP synthase gamma chain (287 aa).

Belongs to the ATPase gamma chain family. F-type ATPases have 2 components, CF(1) - the catalytic core - and CF(0) - the membrane proton channel. CF(1) has five subunits: alpha(3), beta(3), gamma(1), delta(1), epsilon(1). CF(0) has three main subunits: a, b and c.

Its subcellular location is the cell inner membrane. Produces ATP from ADP in the presence of a proton gradient across the membrane. The gamma chain is believed to be important in regulating ATPase activity and the flow of protons through the CF(0) complex. The polypeptide is ATP synthase gamma chain (Xanthomonas campestris pv. campestris (strain B100)).